The chain runs to 259 residues: Proteasome subunit alpha 1 (259 aa).

Residues 231 to 259 (LVPAEPAAASESAPEPKPDTETKPADTQD) are disordered. Residues 233 to 243 (PAEPAAASESA) are compositionally biased toward low complexity. The span at 244-259 (PEPKPDTETKPADTQD) shows a compositional bias: basic and acidic residues.

It belongs to the peptidase T1A family. As to quaternary structure, the 20S proteasome core is composed of 14 alpha and 14 beta subunits that assemble into four stacked heptameric rings, resulting in a barrel-shaped structure. The two inner rings, each composed of seven catalytic beta subunits, are sandwiched by two outer rings, each composed of seven alpha subunits. All four combinations of alpha- and beta-subunits (beta2-alpha1, beta2-alpha2, beta1-alpha2 and beta1-alpha1) yield fully assembled and proteolytically active proteasomes. The catalytic chamber with the active sites is on the inside of the barrel. Has probably a gated structure, the ends of the cylinder being occluded by the N-termini of the alpha-subunits. Is likely capped by the proteasome-associated ATPase, ARC. The N-terminus is blocked.

The protein localises to the cytoplasm. The protein operates within protein degradation; proteasomal Pup-dependent pathway. The formation of the proteasomal ATPase ARC-20S proteasome complex, likely via the docking of the C-termini of ARC into the intersubunit pockets in the alpha-rings, may trigger opening of the gate for substrate entry. Interconversion between the open-gate and close-gate conformations leads to a dynamic regulation of the 20S proteasome proteolysis activity. In terms of biological role, component of the proteasome core, a large protease complex with broad specificity involved in protein degradation. The R.erythropolis proteasomes are able to cleave oligopeptides after Tyr, Phe and Leu, very poorly after Arg but not after Glu. Thus, displays chymotrypsin-like activity, low trypsin-like activity but no caspase-like activity. The sequence is that of Proteasome subunit alpha 1 from Rhodococcus erythropolis (Arthrobacter picolinophilus).